A 200-amino-acid chain; its full sequence is NADH-quinone oxidoreductase subunit C (200 aa).

It belongs to the complex I 30 kDa subunit family. NDH-1 is composed of 14 different subunits. Subunits NuoB, C, D, E, F, and G constitute the peripheral sector of the complex.

The protein localises to the cell inner membrane. The catalysed reaction is a quinone + NADH + 5 H(+)(in) = a quinol + NAD(+) + 4 H(+)(out). Functionally, NDH-1 shuttles electrons from NADH, via FMN and iron-sulfur (Fe-S) centers, to quinones in the respiratory chain. The immediate electron acceptor for the enzyme in this species is believed to be ubiquinone. Couples the redox reaction to proton translocation (for every two electrons transferred, four hydrogen ions are translocated across the cytoplasmic membrane), and thus conserves the redox energy in a proton gradient. The chain is NADH-quinone oxidoreductase subunit C from Cereibacter sphaeroides (strain ATCC 17029 / ATH 2.4.9) (Rhodobacter sphaeroides).